The primary structure comprises 201 residues: Proteasome subunit beta type-2 (201 aa).

M1 is modified (N-acetylmethionine).

Belongs to the peptidase T1B family. In terms of assembly, the 26S proteasome consists of a 20S proteasome core and two 19S regulatory subunits. The 20S proteasome core is a barrel-shaped complex made of 28 subunits that are arranged in four stacked rings. The two outer rings are each formed by seven alpha subunits, and the two inner rings are formed by seven beta subunits. The proteolytic activity is exerted by three beta-subunits PSMB5, PSMB6 and PSMB7.

Its subcellular location is the cytoplasm. It localises to the nucleus. Non-catalytic component of the 20S core proteasome complex involved in the proteolytic degradation of most intracellular proteins. This complex plays numerous essential roles within the cell by associating with different regulatory particles. Associated with two 19S regulatory particles, forms the 26S proteasome and thus participates in the ATP-dependent degradation of ubiquitinated proteins. The 26S proteasome plays a key role in the maintenance of protein homeostasis by removing misfolded or damaged proteins that could impair cellular functions, and by removing proteins whose functions are no longer required. Associated with the PA200 or PA28, the 20S proteasome mediates ubiquitin-independent protein degradation. This type of proteolysis is required in several pathways including spermatogenesis (20S-PA200 complex) or generation of a subset of MHC class I-presented antigenic peptides (20S-PA28 complex). The sequence is that of Proteasome subunit beta type-2 (PSMB2) from Bos taurus (Bovine).